Reading from the N-terminus, the 193-residue chain is Ribonuclease HII (193 aa).

One can recognise an RNase H type-2 domain in the interval 3 to 192 (SLVAGIDEVG…VRAVIDRSSA (190 aa)). Aspartate 9, glutamate 10, and aspartate 101 together coordinate a divalent metal cation.

Belongs to the RNase HII family. Mn(2+) serves as cofactor. The cofactor is Mg(2+).

It is found in the cytoplasm. The catalysed reaction is Endonucleolytic cleavage to 5'-phosphomonoester.. Endonuclease that specifically degrades the RNA of RNA-DNA hybrids. This chain is Ribonuclease HII, found in Methylococcus capsulatus (strain ATCC 33009 / NCIMB 11132 / Bath).